Consider the following 274-residue polypeptide: Large ribosomal subunit protein uL2 (274 aa).

Disordered regions lie at residues 37–59 (KAKNGGRNNNGRITTRHKGGGHK) and 222–262 (GAAM…RTNK). Residues 50-59 (TTRHKGGGHK) show a composition bias toward basic residues.

This sequence belongs to the universal ribosomal protein uL2 family. As to quaternary structure, part of the 50S ribosomal subunit. Forms a bridge to the 30S subunit in the 70S ribosome.

Its function is as follows. One of the primary rRNA binding proteins. Required for association of the 30S and 50S subunits to form the 70S ribosome, for tRNA binding and peptide bond formation. It has been suggested to have peptidyltransferase activity; this is somewhat controversial. Makes several contacts with the 16S rRNA in the 70S ribosome. This Alcanivorax borkumensis (strain ATCC 700651 / DSM 11573 / NCIMB 13689 / SK2) protein is Large ribosomal subunit protein uL2.